The sequence spans 356 residues: Butyrate kinase (356 aa).

It belongs to the acetokinase family.

It is found in the cytoplasm. The enzyme catalyses butanoate + ATP = butanoyl phosphate + ADP. Its pathway is lipid metabolism; butanoate metabolism. Catalyzes the conversion of butyryl-CoA through butyryl phosphate to butyrate. The protein is Butyrate kinase (buk) of Clostridium perfringens (strain ATCC 13124 / DSM 756 / JCM 1290 / NCIMB 6125 / NCTC 8237 / Type A).